A 796-amino-acid polypeptide reads, in one-letter code: High affinity nerve growth factor receptor (796 aa).

The signal sequence occupies residues 1-32 (MLRGGRRGQLGWHSWAAGPGSLLAWLILASAG). The Extracellular portion of the chain corresponds to 33 to 423 (AAPCPDACCP…TPFGVSVAVG (391 aa)). 2 disulfide bridges follow: C36–C41 and C40–C50. N67, N95, N121, N188, N202, N253, N262, N281, N318, N323, N338, N358, and N401 each carry an N-linked (GlcNAc...) asparagine glycan. 2 LRR repeats span residues 90–113 (LGEL…AFHF) and 116–137 (RLSR…TVQG). In terms of domain architecture, LRRCT spans 148-193 (NPLHCSCALRWLQRWEEEGLGGVPEQKLQCHGQGPLAHMPNASCGV). An intrachain disulfide couples C154 to C191. 2 consecutive Ig-like C2-type domains span residues 194–283 (PTLK…VNVS) and 299–365 (WCIP…LAAN). Residues C215 and C265 are joined by a disulfide bond. Residues C300 and C345 are joined by a disulfide bond. Residues 424 to 439 (LAVFACLFLSTLLLVL) traverse the membrane as a helical segment. Residues 440–796 (NKCGRRNKFG…APPVYLDVLG (357 aa)) lie on the Cytoplasmic side of the membrane. The tract at residues 469–490 (MTLGGSSLSPTEGKGSGLQGHI) is interaction with SQSTM1. Position 496 is a phosphotyrosine; by autocatalysis (Y496). The Protein kinase domain occupies 510–781 (IVLKWELGEG…HSIKDVHARL (272 aa)). 516–524 (LGEGAFGKV) lines the ATP pocket. The DXXLL motif lies at 537-541 (DKMLV). ATP is bound at residue K544. Residues 607-611 (DAKLL) carry the DXXLL motif. D650 (proton acceptor) is an active-site residue. A phosphotyrosine; by autocatalysis mark is found at Y676, Y680, Y681, and Y791.

This sequence belongs to the protein kinase superfamily. Tyr protein kinase family. Insulin receptor subfamily. As to quaternary structure, exists in a dynamic equilibrium between monomeric (low affinity) and dimeric (high affinity) structures. Homodimerization is induced by binding of a NGF dimer. Interacts with SQSTM1; bridges NTRK1 to NGFR. Forms a ternary complex with NGFR and KIDINS220; this complex is affected by the expression levels of KIDINS220 and an increase in KIDINS220 expression leads to a decreased association of NGFR and NTRK1. Interacts with SH2D1A; regulates NTRK1. Interacts (phosphorylated upon activation by NGF) with SHC1; mediates SHC1 phosphorylation and activation. Interacts (phosphorylated upon activation by NGF) with PLCG1; mediates PLCG1 phosphorylation and activation. Interacts (phosphorylated) with SH2B1 and SH2B2. Interacts with GRB2. Interacts with PIK3R1. Interacts with FRS2. Interacts with SORT1; may regulate NTRK1 anterograde axonal transport. Interacts with RAB7A. Found in a complex, at least composed of KIDINS220, MAGI2, NTRK1 and RAPGEF2; the complex is mainly formed at late endosomes in a nerve growth factor (NGF)-dependent manner. Interacts with RAPGEF2; the interaction is strengthened after NGF stimulation. Interacts with PTPRS. Interacts with USP36; USP36 does not deubiquitinate NTRK1. Interacts with GGA3. Interacts with TSPAN1; this interaction promotes NTRK1 stability. In terms of processing, ligand-mediated autophosphorylation. Interaction with SQSTM1 is phosphotyrosine-dependent. Autophosphorylation at Tyr-496 mediates interaction and phosphorylation of SHC1. N-glycosylated. Isoform TrkA-I and isoform TrkA-II are N-glycosylated. Post-translationally, ubiquitinated. Undergoes polyubiquitination upon activation; regulated by NGFR. Ubiquitination by NEDD4L leads to degradation. Ubiquitination regulates the internalization of the receptor. In terms of tissue distribution, isoform TrkA-I is found in most non-neuronal tissues. Isoform TrkA-II is primarily expressed in neuronal cells. TrkA-III is specifically expressed by pluripotent neural stem and neural crest progenitors.

It localises to the cell membrane. Its subcellular location is the early endosome membrane. It is found in the late endosome membrane. The protein resides in the recycling endosome membrane. It carries out the reaction L-tyrosyl-[protein] + ATP = O-phospho-L-tyrosyl-[protein] + ADP + H(+). The pro-survival signaling effect of NTRK1 in neurons requires its endocytosis into signaling early endosomes and its retrograde axonal transport. This is regulated by different proteins including CFL1, RAC1 and SORT1. NTF3 is unable to induce this signaling probably due to the lability of the NTF3-NTRK1 complex in endosomes. SH2D1A inhibits the autophosphorylation of the receptor, and alters the recruitment and activation of downstream effectors and signaling cascades. Regulated by NGFR. In terms of biological role, receptor tyrosine kinase involved in the development and the maturation of the central and peripheral nervous systems through regulation of proliferation, differentiation and survival of sympathetic and nervous neurons. High affinity receptor for NGF which is its primary ligand. Can also bind and be activated by NTF3/neurotrophin-3. However, NTF3 only supports axonal extension through NTRK1 but has no effect on neuron survival. Upon dimeric NGF ligand-binding, undergoes homodimerization, autophosphorylation and activation. Recruits, phosphorylates and/or activates several downstream effectors including SHC1, FRS2, SH2B1, SH2B2 and PLCG1 that regulate distinct overlapping signaling cascades driving cell survival and differentiation. Through SHC1 and FRS2 activates a GRB2-Ras-MAPK cascade that regulates cell differentiation and survival. Through PLCG1 controls NF-Kappa-B activation and the transcription of genes involved in cell survival. Through SHC1 and SH2B1 controls a Ras-PI3 kinase-AKT1 signaling cascade that is also regulating survival. In absence of ligand and activation, may promote cell death, making the survival of neurons dependent on trophic factors. Resistant to NGF, it constitutively activates AKT1 and NF-kappa-B and is unable to activate the Ras-MAPK signaling cascade. Antagonizes the anti-proliferative NGF-NTRK1 signaling that promotes neuronal precursors differentiation. Isoform TrkA-III promotes angiogenesis and has oncogenic activity when overexpressed. The protein is High affinity nerve growth factor receptor (NTRK1) of Homo sapiens (Human).